A 350-amino-acid chain; its full sequence is Decarboxylase iboD (350 aa).

This sequence belongs to the phosphatidylserine decarboxylase family.

It functions in the pathway secondary metabolite biosynthesis. Decarboxylase; part of the gene cluster that mediates the biosynthesis of the psychoactive metabolites ibotenic acid and muscimol. The first committed step is glutamate hydroxylation by the 2-oxoglutarate-dependent dioxygenase iboH, and the last step is decarboxylation of ibotenic acid to muscimol by the decarboxylase iboD. The order of the intermediate reactions is somewhat ambiguous. IboA likely activates the carboxylic acid at position 5 to introduce an amide bond, and the flavin monooxygenase iboF generates the N-O bond. There are several options for the latter step. One option is that iboF directly hydroxylates the amide nitrogen formed by iboA to produce a hydroxamic acid species. Another option is that iboF hydroxylates an external N-containing compound, whose resulting N-O bond is subsequently introduced into the hydroxyglutamate scaffold. The paralogous PLP-dependent cystathionine gamma-synthase-like enzymes iboG1 and iboG2 are likely involved in substitution of the OH group at position 3 by the O-N moiety. The first cyclic intermediate is most probably tricholomic acid which is likely desaturated to ibotenic acid by the cytochrome P450 monooxygenase iboC. The sequence is that of Decarboxylase iboD from Amanita muscaria (strain Koide BX008).